The following is a 484-amino-acid chain: Protein nucleotidyltransferase YdiU (484 aa).

8 residues coordinate ATP: Gly81, Gly83, Arg84, Lys103, Asp115, Gly116, Arg166, and Arg173. Asp244 acts as the Proton acceptor in catalysis. Mg(2+) is bound by residues Asn245 and Asp254. An ATP-binding site is contributed by Asp254.

This sequence belongs to the SELO family. Mg(2+) is required as a cofactor. Mn(2+) serves as cofactor.

The catalysed reaction is L-seryl-[protein] + ATP = 3-O-(5'-adenylyl)-L-seryl-[protein] + diphosphate. The enzyme catalyses L-threonyl-[protein] + ATP = 3-O-(5'-adenylyl)-L-threonyl-[protein] + diphosphate. It carries out the reaction L-tyrosyl-[protein] + ATP = O-(5'-adenylyl)-L-tyrosyl-[protein] + diphosphate. It catalyses the reaction L-histidyl-[protein] + UTP = N(tele)-(5'-uridylyl)-L-histidyl-[protein] + diphosphate. The catalysed reaction is L-seryl-[protein] + UTP = O-(5'-uridylyl)-L-seryl-[protein] + diphosphate. The enzyme catalyses L-tyrosyl-[protein] + UTP = O-(5'-uridylyl)-L-tyrosyl-[protein] + diphosphate. Its function is as follows. Nucleotidyltransferase involved in the post-translational modification of proteins. It can catalyze the addition of adenosine monophosphate (AMP) or uridine monophosphate (UMP) to a protein, resulting in modifications known as AMPylation and UMPylation. The polypeptide is Protein nucleotidyltransferase YdiU (Shewanella baltica (strain OS155 / ATCC BAA-1091)).